The primary structure comprises 303 residues: CDAN1-interacting nuclease 1 (303 aa).

Its subcellular location is the nucleus. The protein resides in the cytoplasm. Its function is as follows. May play a role in erythroid cell differentiation. The protein is CDAN1-interacting nuclease 1 of Xenopus laevis (African clawed frog).